A 240-amino-acid chain; its full sequence is Probable septum site-determining protein MinC (240 aa).

The protein belongs to the MinC family. As to quaternary structure, interacts with MinD and FtsZ.

Its function is as follows. Cell division inhibitor that blocks the formation of polar Z ring septums. Rapidly oscillates between the poles of the cell to destabilize FtsZ filaments that have formed before they mature into polar Z rings. Prevents FtsZ polymerization. This chain is Probable septum site-determining protein MinC, found in Acinetobacter baylyi (strain ATCC 33305 / BD413 / ADP1).